The primary structure comprises 143 residues: Transcriptional regulator MraZ (143 aa).

SpoVT-AbrB domains follow at residues 5–47 (TYTP…SARE) and 76–119 (ASDE…DSES).

The protein belongs to the MraZ family. In terms of assembly, forms oligomers.

It localises to the cytoplasm. The protein localises to the nucleoid. This Micrococcus luteus (strain ATCC 4698 / DSM 20030 / JCM 1464 / CCM 169 / CCUG 5858 / IAM 1056 / NBRC 3333 / NCIMB 9278 / NCTC 2665 / VKM Ac-2230) (Micrococcus lysodeikticus) protein is Transcriptional regulator MraZ.